The primary structure comprises 340 residues: Dual specificity protein phosphatase 12 (340 aa).

Position 1 is an N-acetylmethionine (methionine 1). The 146-residue stretch at 26-171 (QMLEVQPGLY…LKLYQAMGYE (146 aa)) folds into the Tyrosine-protein phosphatase domain. Cysteine 115 acts as the Phosphocysteine intermediate in catalysis. Residue 116-121 (HAGVSR) coordinates substrate. A Phosphoserine modification is found at serine 335.

Belongs to the protein-tyrosine phosphatase family. Non-receptor class dual specificity subfamily. In terms of assembly, monomer. Requires Zn(2+) as cofactor. Ubiquitous, highest expression in spleen, testis, ovary, and peripheral blood leukocytes and lower expression in liver and lung.

Its subcellular location is the nucleus. It localises to the cytoplasm. The protein resides in the cytosol. It catalyses the reaction O-phospho-L-tyrosyl-[protein] + H2O = L-tyrosyl-[protein] + phosphate. It carries out the reaction O-phospho-L-seryl-[protein] + H2O = L-seryl-[protein] + phosphate. The catalysed reaction is O-phospho-L-threonyl-[protein] + H2O = L-threonyl-[protein] + phosphate. Its function is as follows. Dual specificity phosphatase; can dephosphorylate both phosphotyrosine and phosphoserine or phosphothreonine residues. Can dephosphorylate glucokinase (in vitro). Has phosphatase activity with the synthetic substrate 6,8-difluoro-4-methylumbelliferyl phosphate and other in vitro substrates. This Homo sapiens (Human) protein is Dual specificity protein phosphatase 12 (DUSP12).